We begin with the raw amino-acid sequence, 801 residues long: Cation/H(+) antiporter 28 (801 aa).

The next 12 helical transmembrane spans lie at 24-44 (ALKI…HYLM), 77-97 (SITL…VMGL), 113-133 (FIAY…TPFL), 140-160 (PYIF…PILT), 179-199 (AAGV…FIFF), 216-236 (LLMF…SPIF), 252-272 (GSHL…PTWP), 275-292 (SMYN…FLPN), 304-324 (INYL…GFII), 343-363 (LLGT…LLLG), 371-391 (SLGL…ALAI), and 403-423 (LIIF…MDII).

This sequence belongs to the monovalent cation:proton antiporter 2 (CPA2) transporter (TC 2.A.37) family. CHX (TC 2.A.37.4) subfamily. Specifically expressed in pollen.

The protein resides in the membrane. May operate as a cation/H(+) antiporter. The chain is Cation/H(+) antiporter 28 (CHX28) from Arabidopsis thaliana (Mouse-ear cress).